The following is a 147-amino-acid chain: Peptide methionine sulfoxide reductase MsrB 2 (147 aa).

The MsrB domain maps to 6–129 (TDEEVSKLTP…NSAALRFIPR (124 aa)). Cys-118 acts as the Nucleophile in catalysis.

This sequence belongs to the MsrB Met sulfoxide reductase family.

The enzyme catalyses L-methionyl-[protein] + [thioredoxin]-disulfide + H2O = L-methionyl-(R)-S-oxide-[protein] + [thioredoxin]-dithiol. This chain is Peptide methionine sulfoxide reductase MsrB 2 (msrB2), found in Rhizobium meliloti (strain 1021) (Ensifer meliloti).